Consider the following 450-residue polypeptide: Glutamate--tRNA ligase 1 (450 aa).

Residues 7–17 (PSPTGYMHVGN) carry the 'HIGH' region motif. The 'KMSKS' region motif lies at 236–240 (KISKR). Lys239 is an ATP binding site.

Belongs to the class-I aminoacyl-tRNA synthetase family. Glutamate--tRNA ligase type 1 subfamily. As to quaternary structure, monomer.

It is found in the cytoplasm. The catalysed reaction is tRNA(Glu) + L-glutamate + ATP = L-glutamyl-tRNA(Glu) + AMP + diphosphate. In terms of biological role, catalyzes the attachment of glutamate to tRNA(Glu) in a two-step reaction: glutamate is first activated by ATP to form Glu-AMP and then transferred to the acceptor end of tRNA(Glu). This chain is Glutamate--tRNA ligase 1, found in Anaplasma phagocytophilum (strain HZ).